The sequence spans 271 residues: 2,3,4,5-tetrahydropyridine-2,6-dicarboxylate N-succinyltransferase (271 aa).

Positions 102 and 139 each coordinate substrate.

Belongs to the transferase hexapeptide repeat family. In terms of assembly, homotrimer.

It is found in the cytoplasm. It catalyses the reaction (S)-2,3,4,5-tetrahydrodipicolinate + succinyl-CoA + H2O = (S)-2-succinylamino-6-oxoheptanedioate + CoA. The protein operates within amino-acid biosynthesis; L-lysine biosynthesis via DAP pathway; LL-2,6-diaminopimelate from (S)-tetrahydrodipicolinate (succinylase route): step 1/3. The protein is 2,3,4,5-tetrahydropyridine-2,6-dicarboxylate N-succinyltransferase of Coxiella burnetii (strain RSA 331 / Henzerling II).